The primary structure comprises 157 residues: Protein Smg (157 aa).

Belongs to the Smg family.

The polypeptide is Protein Smg (Yersinia pestis (strain Pestoides F)).